Consider the following 88-residue polypeptide: UPF0297 protein RBAM_024500 (88 aa).

It belongs to the UPF0297 family.

The chain is UPF0297 protein RBAM_024500 from Bacillus velezensis (strain DSM 23117 / BGSC 10A6 / LMG 26770 / FZB42) (Bacillus amyloliquefaciens subsp. plantarum).